Here is a 1397-residue protein sequence, read N- to C-terminus: Clustered mitochondria protein homolog (1397 aa).

Residues 30–63 form a TPR 1 repeat; that stretch reads LPSFIDQKGDLKIPSHYEETITDLKLTLTVIPKT. Disordered regions lie at residues 158 to 203 and 526 to 555; these read TARG…LSRE and DAAPPSEEEDDAGAEQEKKEEGKAEEDEEE. A compositionally biased stretch (basic and acidic residues) spans 161–203; the sequence is GEAEKSDTNEEEQEQGKGKVGKPNEKESGETKETDSQPELSRE. The region spanning 368 to 640 is the Clu domain; sequence DSSRSQLMLI…RTTPRDIEFI (273 aa). The stretch at 559–595 is one TPR 2 repeat; the sequence is EKVLYGLSSDSQKILEDKSFEKPLKLLSEVFHLKPHG. 4 stretches are compositionally biased toward basic and acidic residues: residues 686–703, 812–831, 839–860, and 1019–1033; these read EGKLEKDGSKGTNSEEKS, EKVEKDRREAEEAEKAKERA, SDDKNQETIENSDAKSKENTES, and QREQKQESVVDNVEK. Disordered regions lie at residues 686–707, 812–869, and 1019–1050; these read EGKLEKDGSKGTNSEEKSQIAL, EKVE…EEQP, and QREQKQESVVDNVEKKHSKKSKKKSPALPIEN. Basic residues predominate over residues 1034 to 1043; sequence KHSKKSKKKS. TPR repeat units follow at residues 1167-1200 and 1209-1242; these read IAAYMNSAYFELANSQIANSLKLYLRAMQLWTST and VNLLTNVADSLYYAKDYESALKLFNAALEACSHL. Polar residues-rich tracts occupy residues 1314–1338 and 1362–1373; these read AQSKKSPPPTQTVAPNARVSASQAS and PQSDPQIANQSV. Positions 1314–1397 are disordered; sequence AQSKKSPPPT…AKSKSKHTKA (84 aa). A compositionally biased stretch (basic and acidic residues) spans 1375-1384; that stretch reads DILKFIEGKS. Over residues 1386-1397 the composition is skewed to basic residues; it reads PNAKSKSKHTKA.

It belongs to the CLU family. May associate with the eukaryotic translation initiation factor 3 (eIF-3) complex.

Its subcellular location is the cytoplasm. In terms of biological role, mRNA-binding protein involved in proper cytoplasmic distribution of mitochondria. The polypeptide is Clustered mitochondria protein homolog (Lodderomyces elongisporus (strain ATCC 11503 / CBS 2605 / JCM 1781 / NBRC 1676 / NRRL YB-4239) (Yeast)).